Reading from the N-terminus, the 546-residue chain is Chaperonin GroEL 4 (546 aa).

ATP-binding positions include 30–33 (TLGP), K51, 87–91 (DGTTT), G415, and D496.

Belongs to the chaperonin (HSP60) family. In terms of assembly, forms a cylinder of 14 subunits composed of two heptameric rings stacked back-to-back. Interacts with the co-chaperonin GroES.

It localises to the cytoplasm. It catalyses the reaction ATP + H2O + a folded polypeptide = ADP + phosphate + an unfolded polypeptide.. Together with its co-chaperonin GroES, plays an essential role in assisting protein folding. The GroEL-GroES system forms a nano-cage that allows encapsulation of the non-native substrate proteins and provides a physical environment optimized to promote and accelerate protein folding. The polypeptide is Chaperonin GroEL 4 (Bradyrhizobium sp. (strain BTAi1 / ATCC BAA-1182)).